The sequence spans 312 residues: MLMKKNASFEDFFLLLGFSNWPHLEVVLFVVILIFYLITLIGNLFIIILSYLDSHLHTPMYFFLSNLSFLDLCYTTSSIPQLLVNLWGPEKTISYAGCTVQLYFVLALGTAECVLLVVMSYDRYAAVCRPLHYTVLMHPRFCRLLAAASWVSGFTTSALHSSFTFWIPLCRHRLVDHFFCEVPALLRLSCVDTQANELTLMVMSSIFVLIPLILILTSYGAIARAVLSMQSTTGLQKVLRTCGAHLMVVSLFFIPVMCMYLQPPSENSQDQGKFIALFYTVVTPSLNPLIYTFRNKDVRGAVKRLMGWEWGM.

The Extracellular portion of the chain corresponds to 1–26 (MLMKKNASFEDFFLLLGFSNWPHLEV). N-linked (GlcNAc...) asparagine glycosylation is present at Asn-6. A helical membrane pass occupies residues 27–50 (VLFVVILIFYLITLIGNLFIIILS). The Cytoplasmic portion of the chain corresponds to 51–58 (YLDSHLHT). The chain crosses the membrane as a helical span at residues 59–80 (PMYFFLSNLSFLDLCYTTSSIP). Topologically, residues 81–101 (QLLVNLWGPEKTISYAGCTVQ) are extracellular. Residues Cys-98 and Cys-190 are joined by a disulfide bond. Residues 102–121 (LYFVLALGTAECVLLVVMSY) form a helical membrane-spanning segment. Over 122–140 (DRYAAVCRPLHYTVLMHPR) the chain is Cytoplasmic. The helical transmembrane segment at 141–159 (FCRLLAAASWVSGFTTSAL) threads the bilayer. The Extracellular portion of the chain corresponds to 160 to 196 (HSSFTFWIPLCRHRLVDHFFCEVPALLRLSCVDTQAN). A helical transmembrane segment spans residues 197–220 (ELTLMVMSSIFVLIPLILILTSYG). Residues 221–237 (AIARAVLSMQSTTGLQK) are Cytoplasmic-facing. Residues 238–260 (VLRTCGAHLMVVSLFFIPVMCMY) traverse the membrane as a helical segment. The Extracellular portion of the chain corresponds to 261–273 (LQPPSENSQDQGK). Residues 274 to 293 (FIALFYTVVTPSLNPLIYTF) form a helical membrane-spanning segment. The Cytoplasmic portion of the chain corresponds to 294–312 (RNKDVRGAVKRLMGWEWGM).

Belongs to the G-protein coupled receptor 1 family.

It is found in the cell membrane. Its function is as follows. Odorant receptor. The chain is Olfactory receptor 2J1 (OR2J1) from Homo sapiens (Human).